The following is a 156-amino-acid chain: Endoribonuclease YbeY (156 aa).

3 residues coordinate Zn(2+): His-122, His-126, and His-132.

Belongs to the endoribonuclease YbeY family. Zn(2+) is required as a cofactor.

It localises to the cytoplasm. Its function is as follows. Single strand-specific metallo-endoribonuclease involved in late-stage 70S ribosome quality control and in maturation of the 3' terminus of the 16S rRNA. This Symbiobacterium thermophilum (strain DSM 24528 / JCM 14929 / IAM 14863 / T) protein is Endoribonuclease YbeY.